Reading from the N-terminus, the 160-residue chain is Small ribosomal subunit protein bS16 (160 aa).

The tract at residues 115 to 139 (GGPTTEATRPKKKVSAKKAAKAVES) is disordered. The span at 124–134 (PKKKVSAKKAA) shows a compositional bias: basic residues.

It belongs to the bacterial ribosomal protein bS16 family.

The protein is Small ribosomal subunit protein bS16 of Mycobacterium leprae (strain Br4923).